We begin with the raw amino-acid sequence, 196 residues long: Orotate phosphoribosyltransferase (196 aa).

5-phospho-alpha-D-ribose 1-diphosphate is bound at residue 117–125 (EDIVTTGLS). Residues Thr121 and Arg149 each contribute to the orotate site.

This sequence belongs to the purine/pyrimidine phosphoribosyltransferase family. PyrE subfamily. Homodimer. Requires Mg(2+) as cofactor.

It carries out the reaction orotidine 5'-phosphate + diphosphate = orotate + 5-phospho-alpha-D-ribose 1-diphosphate. The protein operates within pyrimidine metabolism; UMP biosynthesis via de novo pathway; UMP from orotate: step 1/2. Catalyzes the transfer of a ribosyl phosphate group from 5-phosphoribose 1-diphosphate to orotate, leading to the formation of orotidine monophosphate (OMP). The polypeptide is Orotate phosphoribosyltransferase (Methylobacterium sp. (strain 4-46)).